Consider the following 291-residue polypeptide: ATP synthase gamma chain (291 aa).

This sequence belongs to the ATPase gamma chain family. As to quaternary structure, F-type ATPases have 2 components, CF(1) - the catalytic core - and CF(0) - the membrane proton channel. CF(1) has five subunits: alpha(3), beta(3), gamma(1), delta(1), epsilon(1). CF(0) has three main subunits: a, b and c.

The protein resides in the cell inner membrane. In terms of biological role, produces ATP from ADP in the presence of a proton gradient across the membrane. The gamma chain is believed to be important in regulating ATPase activity and the flow of protons through the CF(0) complex. The chain is ATP synthase gamma chain from Burkholderia cenocepacia (strain ATCC BAA-245 / DSM 16553 / LMG 16656 / NCTC 13227 / J2315 / CF5610) (Burkholderia cepacia (strain J2315)).